A 368-amino-acid polypeptide reads, in one-letter code: MSFVDGVNSWFSAASYWDGLGPTNVVQPEDDLAFVSQFEEVESAYDNLVKNGMIAPRRKNSFASSVNNPFSTSALSEALNGSVSMSHVPSSGLLKSTLSSTPTAGSNLLGTSPAEPASGLVGSSGFGSSMLGSSLPGNATSNFGSQASTSLLHPRRSTTSLLSSSAHHSRSSYYDLATPTRSSFSYNTVGAASLPSGGLSNLSSSLRSSSKSAGFSLFESASNSFTPSSFIESANMESLSIPSRRRPSSIAPIGTRPSRKEIAFSNSSTPTDQTLRPPNPPAANGNATPVTAVNNVSAVADSPQSTGSSVSSSLPTLSLDFKQEYSGNNHDMSGLSSSLSKSHNSTSALSSQIWSSPCASTLGGVNVW.

The interval 237–287 (ESLSIPSRRRPSSIAPIGTRPSRKEIAFSNSSTPTDQTLRPPNPPAANGNA) is disordered. Low complexity predominate over residues 238-253 (SLSIPSRRRPSSIAPI). Residues 264 to 276 (FSNSSTPTDQTLR) show a composition bias toward polar residues.

This is an uncharacterized protein from Schizosaccharomyces pombe (strain 972 / ATCC 24843) (Fission yeast).